Here is a 640-residue protein sequence, read N- to C-terminus: Biosynthetic arginine decarboxylase (640 aa).

Residue K109 is modified to N6-(pyridoxal phosphate)lysine. 291-301 (LDVGGGLGVDY) lines the substrate pocket.

It belongs to the Orn/Lys/Arg decarboxylase class-II family. SpeA subfamily. Mg(2+) serves as cofactor. It depends on pyridoxal 5'-phosphate as a cofactor.

The enzyme catalyses L-arginine + H(+) = agmatine + CO2. It participates in amine and polyamine biosynthesis; agmatine biosynthesis; agmatine from L-arginine: step 1/1. Catalyzes the biosynthesis of agmatine from arginine. This is Biosynthetic arginine decarboxylase from Synechococcus sp. (strain RCC307).